A 180-amino-acid chain; its full sequence is Isopentenyl-diphosphate Delta-isomerase (180 aa).

2 residues coordinate Mn(2+): His-22 and His-28. The Nudix hydrolase domain maps to 26-160 (LKHKAVSVFA…PERFTPWLKI (135 aa)). Residue Cys-62 is part of the active site. A Mg(2+)-binding site is contributed by Cys-62. His-64 is a binding site for Mn(2+). Glu-82 contributes to the Mg(2+) binding site. Positions 108 and 110 each coordinate Mn(2+). Residue Glu-110 is part of the active site.

The protein belongs to the IPP isomerase type 1 family. Mg(2+) serves as cofactor. Mn(2+) is required as a cofactor.

Its subcellular location is the cytoplasm. The catalysed reaction is isopentenyl diphosphate = dimethylallyl diphosphate. The protein operates within isoprenoid biosynthesis; dimethylallyl diphosphate biosynthesis; dimethylallyl diphosphate from isopentenyl diphosphate: step 1/1. Its function is as follows. Catalyzes the 1,3-allylic rearrangement of the homoallylic substrate isopentenyl (IPP) to its highly electrophilic allylic isomer, dimethylallyl diphosphate (DMAPP). The chain is Isopentenyl-diphosphate Delta-isomerase from Ruegeria pomeroyi (strain ATCC 700808 / DSM 15171 / DSS-3) (Silicibacter pomeroyi).